Here is a 260-residue protein sequence, read N- to C-terminus: Snake venom serine protease pallabin-2 (260 aa).

Positions 1 to 18 (MVLIKVLANLLILQLSYA) are cleaved as a signal peptide. A propeptide spanning residues 19–24 (QKSSEL) is cleaved from the precursor. Residues 25–251 (IIGGDECNIN…HLDWIENIIA (227 aa)) enclose the Peptidase S1 domain. Intrachain disulfides connect cysteine 31–cysteine 163, cysteine 50–cysteine 66, cysteine 98–cysteine 258, cysteine 142–cysteine 212, cysteine 174–cysteine 191, and cysteine 202–cysteine 227. Histidine 65 acts as the Charge relay system in catalysis. The N-linked (GlcNAc...) asparagine glycan is linked to asparagine 103. Residue aspartate 110 is the Charge relay system of the active site. Serine 206 serves as the catalytic Charge relay system.

This sequence belongs to the peptidase S1 family. Snake venom subfamily. Monomer. In terms of tissue distribution, expressed by the venom gland.

It localises to the secreted. Its function is as follows. Snake venom serine protease that may act in the hemostasis system of the prey. In Gloydius halys (Chinese water mocassin), this protein is Snake venom serine protease pallabin-2 (JZTHR7).